A 183-amino-acid chain; its full sequence is Peptide deformylase (183 aa).

Positions 110 and 153 each coordinate Fe cation. The active site involves Glu-154. His-157 contributes to the Fe cation binding site.

The protein belongs to the polypeptide deformylase family. It depends on Fe(2+) as a cofactor.

It catalyses the reaction N-terminal N-formyl-L-methionyl-[peptide] + H2O = N-terminal L-methionyl-[peptide] + formate. Removes the formyl group from the N-terminal Met of newly synthesized proteins. Requires at least a dipeptide for an efficient rate of reaction. N-terminal L-methionine is a prerequisite for activity but the enzyme has broad specificity at other positions. The sequence is that of Peptide deformylase from Listeria monocytogenes serotype 4a (strain HCC23).